Consider the following 189-residue polypeptide: UPF0200 protein Smar_1234 (189 aa).

10–17 (GMPGAGKS) provides a ligand contact to ATP.

The protein belongs to the UPF0200 family.

The chain is UPF0200 protein Smar_1234 from Staphylothermus marinus (strain ATCC 43588 / DSM 3639 / JCM 9404 / F1).